A 298-amino-acid polypeptide reads, in one-letter code: MTDAPEISPLDQARILSEALPHMQEYDEETIVIKYGGHAMGAEDLAKAFARDIVLLEQTAINPVVVHGGGPQIATMLKRLGIKSEFAAGLRITDAATIEIVEMVLAGSINKQLVGYINEAGGKAVGLCGKDGNMVSATKATRTMVDPDSRIEEVIDLGFVGEPEKVDLTLLNQLIGHELIPVLAPLATSSSGQTFNVNADTFAGAVAGALKAKRLLLLTDVPGVLDKSKKLIPELSVKDARRLIADGTISGGMIPKVETCIYALEQGVQGVVIIDGKTPHAVLLELFTNQGTGTLIHK.

Residues 69 to 70 (GG), R91, and N196 contribute to the substrate site.

Belongs to the acetylglutamate kinase family. ArgB subfamily.

It localises to the cytoplasm. The catalysed reaction is N-acetyl-L-glutamate + ATP = N-acetyl-L-glutamyl 5-phosphate + ADP. It participates in amino-acid biosynthesis; L-arginine biosynthesis; N(2)-acetyl-L-ornithine from L-glutamate: step 2/4. In terms of biological role, catalyzes the ATP-dependent phosphorylation of N-acetyl-L-glutamate. The chain is Acetylglutamate kinase from Rhodopseudomonas palustris (strain BisB18).